We begin with the raw amino-acid sequence, 339 residues long: Ketol-acid reductoisomerase (NADP(+)) (339 aa).

The 182-residue stretch at 1–182 folds into the KARI N-terminal Rossmann domain; the sequence is MRVYYDRDAD…GGGRSGIIET (182 aa). Residues 24–27, Arg-48, Ser-51, Ser-53, and 83–86 contribute to the NADP(+) site; these read YGSQ and DELQ. The active site involves His-108. Gly-134 provides a ligand contact to NADP(+). The KARI C-terminal knotted domain maps to 183–328; it reads TFREECETDL…EKLRAMMPWI (146 aa). The Mg(2+) site is built by Asp-191, Glu-195, Glu-227, and Glu-231. Ser-252 is a binding site for substrate.

The protein belongs to the ketol-acid reductoisomerase family. The cofactor is Mg(2+).

It carries out the reaction (2R)-2,3-dihydroxy-3-methylbutanoate + NADP(+) = (2S)-2-acetolactate + NADPH + H(+). The catalysed reaction is (2R,3R)-2,3-dihydroxy-3-methylpentanoate + NADP(+) = (S)-2-ethyl-2-hydroxy-3-oxobutanoate + NADPH + H(+). It functions in the pathway amino-acid biosynthesis; L-isoleucine biosynthesis; L-isoleucine from 2-oxobutanoate: step 2/4. The protein operates within amino-acid biosynthesis; L-valine biosynthesis; L-valine from pyruvate: step 2/4. Its function is as follows. Involved in the biosynthesis of branched-chain amino acids (BCAA). Catalyzes an alkyl-migration followed by a ketol-acid reduction of (S)-2-acetolactate (S2AL) to yield (R)-2,3-dihydroxy-isovalerate. In the isomerase reaction, S2AL is rearranged via a Mg-dependent methyl migration to produce 3-hydroxy-3-methyl-2-ketobutyrate (HMKB). In the reductase reaction, this 2-ketoacid undergoes a metal-dependent reduction by NADPH to yield (R)-2,3-dihydroxy-isovalerate. The sequence is that of Ketol-acid reductoisomerase (NADP(+)) from Chelativorans sp. (strain BNC1).